The following is a 152-amino-acid chain: Small ribosomal subunit protein uS15 (152 aa).

Over residues 1 to 10 (MAKMHTRTKG) the composition is skewed to basic residues. The disordered stretch occupies residues 1 to 26 (MAKMHTRTKGKSGSTKPIRSESPAWS). Residues 11-26 (KSGSTKPIRSESPAWS) show a composition bias toward polar residues.

Belongs to the universal ribosomal protein uS15 family. In terms of assembly, part of the 30S ribosomal subunit.

The polypeptide is Small ribosomal subunit protein uS15 (Methanococcoides burtonii (strain DSM 6242 / NBRC 107633 / OCM 468 / ACE-M)).